The following is a 392-amino-acid chain: Formate-dependent phosphoribosylglycinamide formyltransferase (392 aa).

N(1)-(5-phospho-beta-D-ribosyl)glycinamide is bound by residues 22–23 and glutamate 82; that span reads EL. Residues arginine 114, lysine 155, 160 to 165, 195 to 198, and glutamate 203 contribute to the ATP site; these read SSGKGQ and EGVV. The ATP-grasp domain occupies 119–308; it reads RLAAEELGLP…EFALHVRAFL (190 aa). Residues glutamate 267 and glutamate 279 each coordinate Mg(2+). Residues aspartate 286, lysine 355, and 362–363 each bind N(1)-(5-phospho-beta-D-ribosyl)glycinamide; that span reads RR.

It belongs to the PurK/PurT family. In terms of assembly, homodimer.

The catalysed reaction is N(1)-(5-phospho-beta-D-ribosyl)glycinamide + formate + ATP = N(2)-formyl-N(1)-(5-phospho-beta-D-ribosyl)glycinamide + ADP + phosphate + H(+). Its pathway is purine metabolism; IMP biosynthesis via de novo pathway; N(2)-formyl-N(1)-(5-phospho-D-ribosyl)glycinamide from N(1)-(5-phospho-D-ribosyl)glycinamide (formate route): step 1/1. Involved in the de novo purine biosynthesis. Catalyzes the transfer of formate to 5-phospho-ribosyl-glycinamide (GAR), producing 5-phospho-ribosyl-N-formylglycinamide (FGAR). Formate is provided by PurU via hydrolysis of 10-formyl-tetrahydrofolate. The chain is Formate-dependent phosphoribosylglycinamide formyltransferase from Salmonella dublin (strain CT_02021853).